We begin with the raw amino-acid sequence, 154 residues long: Large ribosomal subunit protein uL13 (154 aa).

Belongs to the universal ribosomal protein uL13 family. In terms of assembly, part of the 50S ribosomal subunit.

This protein is one of the early assembly proteins of the 50S ribosomal subunit, although it is not seen to bind rRNA by itself. It is important during the early stages of 50S assembly. This Rhodospirillum centenum (strain ATCC 51521 / SW) protein is Large ribosomal subunit protein uL13.